Here is a 278-residue protein sequence, read N- to C-terminus: UPF0750 membrane protein YxkD (278 aa).

5 helical membrane-spanning segments follow: residues 8 to 28 (VLML…FAIP), 46 to 66 (LFQW…LLIG), 77 to 97 (YTII…GWSI), 101 to 121 (ELII…GMII), and 145 to 165 (ISYA…FIIG).

The protein belongs to the UPF0750 family.

The protein resides in the cell membrane. The polypeptide is UPF0750 membrane protein YxkD (yxkD) (Bacillus subtilis (strain 168)).